Reading from the N-terminus, the 155-residue chain is Large ribosomal subunit protein uL15 (155 aa).

Residues M1–K63 form a disordered region. Composition is skewed to gly residues over residues R21–S31 and S42–G52.

It belongs to the universal ribosomal protein uL15 family. In terms of assembly, part of the 50S ribosomal subunit.

Functionally, binds to the 23S rRNA. This is Large ribosomal subunit protein uL15 from Symbiobacterium thermophilum (strain DSM 24528 / JCM 14929 / IAM 14863 / T).